The following is a 178-amino-acid chain: uncharacterized protein (178 aa).

The protein to E.coli YrdD.

This is an uncharacterized protein from Haemophilus influenzae (strain ATCC 51907 / DSM 11121 / KW20 / Rd).